Here is a 90-residue protein sequence, read N- to C-terminus: RNA-binding protein Hfq (90 aa).

The 60-residue stretch at 9 to 68 (DPFLNALRRERVPVSIYLVNGIKLQGQVESFDQFVILLKNTVSQMVYKHAISTVVPARPF) folds into the Sm domain.

The protein belongs to the Hfq family. Homohexamer.

In terms of biological role, RNA chaperone that binds small regulatory RNA (sRNAs) and mRNAs to facilitate mRNA translational regulation in response to envelope stress, environmental stress and changes in metabolite concentrations. Also binds with high specificity to tRNAs. The chain is RNA-binding protein Hfq from Shewanella baltica (strain OS155 / ATCC BAA-1091).